A 181-amino-acid chain; its full sequence is Extracellular superoxide dismutase [Cu-Zn] (181 aa).

Residues 1–18 (MMQYLVVSLALCATICSA) form the signal peptide. Asparagine 46 carries N-linked (GlcNAc...) asparagine glycosylation. Positions 75, 77, and 92 each coordinate Cu cation. Cysteine 86 and cysteine 175 are oxidised to a cystine. 4 residues coordinate Zn(2+): histidine 92, histidine 100, histidine 109, and aspartate 112. N-linked (GlcNAc...) asparagine glycosylation occurs at asparagine 119. Histidine 149 serves as a coordination point for Cu cation. N-linked (GlcNAc...) asparagine glycosylation occurs at asparagine 159.

It belongs to the Cu-Zn superoxide dismutase family. The cofactor is Cu cation. Requires Zn(2+) as cofactor. In terms of tissue distribution, expressed at higher levels in females compared to males.

It is found in the secreted. The enzyme catalyses 2 superoxide + 2 H(+) = H2O2 + O2. In terms of biological role, protects the extracellular space from the toxic effects of reactive oxygen intermediates by converting superoxide radicals into hydrogen peroxide and oxygen. The chain is Extracellular superoxide dismutase [Cu-Zn] from Drosophila melanogaster (Fruit fly).